Consider the following 430-residue polypeptide: Adenylosuccinate synthetase (430 aa).

Residues 12 to 18 and 40 to 42 contribute to the GTP site; these read GDEGKGK and GHT. The Proton acceptor role is filled by aspartate 13. Mg(2+)-binding residues include aspartate 13 and glycine 40. Residues 13 to 16, 38 to 41, threonine 130, arginine 144, glutamine 224, threonine 239, and arginine 303 contribute to the IMP site; these read DEGK and NAGH. Histidine 41 functions as the Proton donor in the catalytic mechanism. Position 299–305 (299–305) interacts with substrate; it reads TVTGRKR. GTP is bound by residues arginine 305, 331–333, and 413–415; these read KLD and STS.

The protein belongs to the adenylosuccinate synthetase family. Homodimer. Requires Mg(2+) as cofactor.

Its subcellular location is the cytoplasm. It carries out the reaction IMP + L-aspartate + GTP = N(6)-(1,2-dicarboxyethyl)-AMP + GDP + phosphate + 2 H(+). It functions in the pathway purine metabolism; AMP biosynthesis via de novo pathway; AMP from IMP: step 1/2. In terms of biological role, plays an important role in the de novo pathway of purine nucleotide biosynthesis. Catalyzes the first committed step in the biosynthesis of AMP from IMP. This chain is Adenylosuccinate synthetase, found in Parvibaculum lavamentivorans (strain DS-1 / DSM 13023 / NCIMB 13966).